We begin with the raw amino-acid sequence, 401 residues long: Ureide permease 4 (401 aa).

At 1–10 (MYVVESKAGA) the chain is on the extracellular side. Residues 11-31 (IGCMILSLCCLGSWPAILTLL) form a helical membrane-spanning segment. At 32-40 (ERRGRLPQH) the chain is on the cytoplasmic side. The chain crosses the membrane as a helical span at residues 41-61 (TFLDFATANLLAAIVIAFSLG). Residues 62 to 81 (EIGKSTFLKPDFTTQLPQDN) lie on the Extracellular side of the membrane. Residues 82-102 (WPSVLLAVAGGVLLSIGNLAT) form a helical membrane-spanning segment. Topologically, residues 103–104 (QY) are cytoplasmic. Residues 105 to 125 (AFAFVGLSVTEVITASITVVI) form a helical membrane-spanning segment. Over 126–141 (GTTLNYFLDNKINKAE) the chain is Extracellular. A helical transmembrane segment spans residues 142-162 (ILFPGVGCFLIAVFLGAAVHA). At 163–231 (SNAADVKEKL…KRAIKVFGKS (69 aa)) the chain is on the cytoplasmic side. Position 224–231 (224–231 (AIKVFGKS)) interacts with ATP. The chain crosses the membrane as a helical span at residues 232-252 (IMIGLFITLFAGISLSLFSPA). Over 253 to 275 (FNLATNDQWSTLPKGVPKLVVYT) the chain is Extracellular. A helical membrane pass occupies residues 276–296 (AFFYFSIAGFLISLILNLIFL). Over 297–318 (YRPMVGLARSSLKKYIYDSKGR) the chain is Cytoplasmic. A helical transmembrane segment spans residues 319–339 (GWAVFAGFLCGFGNGLQFMGG). Over 340–344 (QAAGY) the chain is Extracellular. A helical membrane pass occupies residues 345-365 (AAADSVQALPLVSTFWGIVLF). The Cytoplasmic portion of the chain corresponds to 366–374 (GEYRKSSKR). Residues 375–395 (TYALLVSMLAMFVAAVAILMA) traverse the membrane as a helical segment. The Extracellular segment spans residues 396 to 401 (SSGHRK).

This sequence belongs to the plant ureide permease (TC 2.A.7.19) family. Expressed in developing seedlings, flower filaments and stigma, and the top and bottom parts of carpels in siliques.

The protein resides in the membrane. Proton-coupled transporter that transports a wide spectrum of oxo derivatives of heterocyclic nitrogen compounds. The sequence is that of Ureide permease 4 from Arabidopsis thaliana (Mouse-ear cress).